Reading from the N-terminus, the 484-residue chain is Pheophytinase, chloroplastic (484 aa).

The transit peptide at 1 to 47 (MEIISLNVVPQCSVVTWSSKLATKRLVPNRSSLLFSGVKKSRLVIRS) directs the protein to the chloroplast.

It belongs to the AB hydrolase superfamily. Interacts with HCAR, RCCR, PAO and the LHCII complex. Part of a SGR1-CCE-LHCII complex, which acts in chlorophyll breakdown.

The protein resides in the plastid. It localises to the chloroplast thylakoid membrane. It is found in the chloroplast stroma. Alpha/beta hydrolase dephytylating specifically the Mg-free chlorophyll pigment (pheophytin), yielding pheophorbide. No activity on chlorophyll. Belongs to the chlorophyll catabolic enzymes (CCEs). The sequence is that of Pheophytinase, chloroplastic (PPH) from Arabidopsis thaliana (Mouse-ear cress).